Reading from the N-terminus, the 245-residue chain is 2,3-bisphosphoglycerate-dependent phosphoglycerate mutase (245 aa).

Substrate-binding positions include arginine 8–asparagine 15, threonine 21–glycine 22, arginine 60, glutamate 87–tyrosine 90, lysine 98, arginine 114–arginine 115, and glycine 183–asparagine 184. The active-site Tele-phosphohistidine intermediate is the histidine 9. The Proton donor/acceptor role is filled by glutamate 87.

This sequence belongs to the phosphoglycerate mutase family. BPG-dependent PGAM subfamily.

It catalyses the reaction (2R)-2-phosphoglycerate = (2R)-3-phosphoglycerate. The protein operates within carbohydrate degradation; glycolysis; pyruvate from D-glyceraldehyde 3-phosphate: step 3/5. In terms of biological role, catalyzes the interconversion of 2-phosphoglycerate and 3-phosphoglycerate. The chain is 2,3-bisphosphoglycerate-dependent phosphoglycerate mutase from Bacillus cereus (strain ZK / E33L).